A 305-amino-acid polypeptide reads, in one-letter code: tRNA dimethylallyltransferase (305 aa).

Position 9–16 (9–16 (GPTASGKT)) interacts with ATP. 11-16 (TASGKT) is a binding site for substrate. Interaction with substrate tRNA stretches follow at residues 34–37 (DSAL), 158–162 (QRLSR), and 239–244 (RCVGYR).

It belongs to the IPP transferase family. Monomer. Mg(2+) serves as cofactor.

The enzyme catalyses adenosine(37) in tRNA + dimethylallyl diphosphate = N(6)-dimethylallyladenosine(37) in tRNA + diphosphate. Catalyzes the transfer of a dimethylallyl group onto the adenine at position 37 in tRNAs that read codons beginning with uridine, leading to the formation of N6-(dimethylallyl)adenosine (i(6)A). The sequence is that of tRNA dimethylallyltransferase from Aeromonas hydrophila subsp. hydrophila (strain ATCC 7966 / DSM 30187 / BCRC 13018 / CCUG 14551 / JCM 1027 / KCTC 2358 / NCIMB 9240 / NCTC 8049).